The following is a 311-amino-acid chain: Thioredoxin reductase (311 aa).

Residue 33-43 (EGFFSGISGGQ) participates in FAD binding. C138 and C141 are joined by a disulfide. Residue 283–292 (DVQDKYYRQA) coordinates FAD.

This sequence belongs to the class-II pyridine nucleotide-disulfide oxidoreductase family. As to quaternary structure, homodimer. It depends on FAD as a cofactor.

Its subcellular location is the cytoplasm. It carries out the reaction [thioredoxin]-dithiol + NADP(+) = [thioredoxin]-disulfide + NADPH + H(+). The sequence is that of Thioredoxin reductase (trxB) from Chlamydia pneumoniae (Chlamydophila pneumoniae).